Reading from the N-terminus, the 597-residue chain is MSSTVNNGAASMQSTPDAANGFPQPSSSSGTWPRAEEELRAAEPGLVKRAHREILDHERKRRVELKCMELQEMMEEQGYSEEEIRQKVGTFRQMLMEKEGVLTREDRPGGHIVAETPRLTEGAEPGLEYAPFDDDDGPVDCDCPASCYRGHRGYRTKHWSSSSASPPPKKKKKKKGGHRRSRKKRRLESECSCGSSSPLRKKKKSVKKHRRDRSDSGSRRKRRHRSRSSKCKRKEKNKEKKRPHTESPGRRSHRHSSGSSHSPSLSSHYSDSRSPSRLSPKHRDEGRKTGSQRSSGSRSPSPSGGSGWGSPQRNGGSGQRSGAHGGRPGSAHSPPDKPSSPSPRVRDKAAAAAPTPPARGKESPSPRSAPSSQGRGGRAAGGAGRRRRRRRRRRRSRSSASAPRRRGRRRPRPAPPRGSSRSLSRARSSSDSGSGRGAPGPGPEPGSERGHGGHGKRAKERPPRARPASTSPSPGAHGRRGGPEGKSSSRSPGPHPRSWSSSRSPSKSRSRSAEKRPHSPSRSPSPKKPLSRDKDGEGRARHSEAEATRARRRSRSYSPIRKRRRDSPSFMEPRRITSAASVLFHTTGPAPLPPPAA.

A compositionally biased stretch (polar residues) spans 1-31; it reads MSSTVNNGAASMQSTPDAANGFPQPSSSSGT. Residues 1–47 are disordered; sequence MSSTVNNGAASMQSTPDAANGFPQPSSSSGTWPRAEEELRAAEPGLV. The 44-residue stretch at 55-98 folds into the CWF21 domain; it reads LDHERKRRVELKCMELQEMMEEQGYSEEEIRQKVGTFRQMLMEK. Over residues 99–109 the composition is skewed to basic and acidic residues; that stretch reads EGVLTREDRPG. Residues 99–597 form a disordered region; it reads EGVLTREDRP…GPAPLPPPAA (499 aa). 4 stretches are compositionally biased toward basic residues: residues 149 to 158, 168 to 186, 199 to 211, and 219 to 243; these read RGHRGYRTKH, PKKKKKKKGGHRRSRKKRR, LRKKKKSVKKHRR, and RRKRRHRSRSSKCKRKEKNKEKKRP. 2 stretches are compositionally biased toward low complexity: residues 257 to 278 and 291 to 313; these read SGSSHSPSLSSHYSDSRSPSRL and SQRSSGSRSPSPSGGSGWGSPQR. Composition is skewed to gly residues over residues 315-328 and 374-383; these read GGSGQRSGAHGGRP and GRGGRAAGGA. Residues 384 to 412 are compositionally biased toward basic residues; that stretch reads GRRRRRRRRRRRSRSSASAPRRRGRRRPR. Composition is skewed to low complexity over residues 417 to 433, 466 to 476, and 488 to 507; these read RGSSRSLSRARSSSDSG, RPASTSPSPGA, and SSRSPGPHPRSWSSSRSPSK. Over residues 530–549 the composition is skewed to basic and acidic residues; that stretch reads LSRDKDGEGRARHSEAEATR. Positions 550–565 are enriched in basic residues; sequence ARRRSRSYSPIRKRRR.

It belongs to the CWC21 family. In terms of tissue distribution, expressed in breast cancer cell lines.

In terms of biological role, may play a role in regulating breast cancer cell invasiveness. May be involved in RYBP-mediated breast cancer progression. In Homo sapiens (Human), this protein is Serine/arginine repetitive matrix protein 3 (SRRM3).